A 106-amino-acid polypeptide reads, in one-letter code: Toxin-like structure LSTX-D7 (106 aa).

The signal sequence occupies residues 1–20 (MMKVLVVFALLVTLISYSSS). Residues 21 to 41 (EGIDDLEADELLSLMANEQTR) constitute a propeptide that is removed on maturation. Disulfide bonds link cysteine 45/cysteine 60, cysteine 52/cysteine 69, cysteine 59/cysteine 85, and cysteine 71/cysteine 83.

Belongs to the neurotoxin 19 (CSTX) family. 02 (D7) subfamily. In terms of tissue distribution, expressed by the venom gland.

It is found in the secreted. The sequence is that of Toxin-like structure LSTX-D7 from Lycosa singoriensis (Wolf spider).